Here is a 633-residue protein sequence, read N- to C-terminus: FAD-binding monooxygenase andJ (633 aa).

Residues threonine 117–tryptophan 120, aspartate 129–threonine 130, and tyrosine 135 each bind FAD. Methionine 127–aspartate 129 lines the NADP(+) pocket. Residues threonine 269 to glutamine 275 and arginine 292 to threonine 293 contribute to the NADP(+) site.

Belongs to the FAD-binding monooxygenase family. It depends on FAD as a cofactor.

Its pathway is secondary metabolite biosynthesis; terpenoid biosynthesis. FAD-binding monooxygenase; part of the gene cluster that mediates the biosynthesis of anditomin, a fungal meroterpenoid. The first step of the pathway is the synthesis of 3,5-dimethylorsellinic acid (DMOA) by the polyketide synthase andM. DMOA is then converted to the phthalide compound 5,7-dihydroxy-4,6-dimethylphthalide (DHDMP) by the cytochrome P450 monooxygenase andK, which is further prenylated by the prenyltransferase andD to yield farnesyl-DHDMP. Further epoxidation by the FAD-dependent monooxygenase andE leads to epoxyfarnesyl-DHDMP. The next step involves the terpene cyclase andB that converts epoxyfarnesyl-DHDMP into preandiloid A through opening of the epoxide ring followed by the cyclization of the farnesyl moiety. Preandiloid A is in turn oxidized at the C-3 hydroxyl group to yield preandiloid B by the dehydrogenase andC. The dioxygenase andA is solely responsible for the dehydrogenation of preandiloid B leading to the enone preandiloid C, as well as for the intriguing structural rearrangement to generate the bicyclo[2.2.2]octane core, transforming preandiloid C into andiconin. FAD-binding monooxygenase andJ then produces andilesin D which is reduced by dehydrogenase andI to yield andilesin A. Action of acetyltransferase andG followed by a spontaneous acetate elimination leads then to andilesin B, which is in turn substrate of the short chain dehydrogenase andH to yield andilesin C. Finally, the dioxygenase andF catalyzes the transformation of andilesin C to anditomin. The protein is FAD-binding monooxygenase andJ of Emericella variicolor (Aspergillus stellatus).